We begin with the raw amino-acid sequence, 354 residues long: Uroporphyrinogen decarboxylase (354 aa).

Substrate-binding positions include 27–31 (RQAGR), Phe46, Asp77, Tyr154, Ser209, and His327.

This sequence belongs to the uroporphyrinogen decarboxylase family. As to quaternary structure, homodimer.

It is found in the cytoplasm. The catalysed reaction is uroporphyrinogen III + 4 H(+) = coproporphyrinogen III + 4 CO2. Its pathway is porphyrin-containing compound metabolism; protoporphyrin-IX biosynthesis; coproporphyrinogen-III from 5-aminolevulinate: step 4/4. Its function is as follows. Catalyzes the decarboxylation of four acetate groups of uroporphyrinogen-III to yield coproporphyrinogen-III. This chain is Uroporphyrinogen decarboxylase, found in Shewanella oneidensis (strain ATCC 700550 / JCM 31522 / CIP 106686 / LMG 19005 / NCIMB 14063 / MR-1).